We begin with the raw amino-acid sequence, 249 residues long: ATP synthase subunit a, chloroplastic (249 aa).

Helical transmembrane passes span 38 to 58 (AQVL…AVLA), 97 to 117 (VPFI…GALL), 136 to 156 (INTT…AGLH), 201 to 221 (LVVA…MMFL), and 222 to 242 (GLFT…AYIG).

Belongs to the ATPase A chain family. F-type ATPases have 2 components, CF(1) - the catalytic core - and CF(0) - the membrane proton channel. CF(1) has five subunits: alpha(3), beta(3), gamma(1), delta(1), epsilon(1). CF(0) has four main subunits: a, b, b' and c.

The protein localises to the plastid. It is found in the chloroplast thylakoid membrane. Key component of the proton channel; it plays a direct role in the translocation of protons across the membrane. This Physcomitrium patens (Spreading-leaved earth moss) protein is ATP synthase subunit a, chloroplastic.